The following is a 694-amino-acid chain: MARKFELKDYRNIGIMAHIDAGKTTTTERILFHTGKIHKIGETHDGVSQMDWMEQEKERGITITSAATTAFWKGKRINIIDTPGHVDFTVEVERSLRVLDGAVAVLDAQSGVEPQTETVWRQATNYSVPRIVYVNKMDKAGANFEASIESVRTKLNGNAVAIQLNIGAEADFSGLIDLVEMKAYNYDGQKEEIEYEIPIPEDLFEKASQMRLALAEAVADYDEEIFNNLLEEKEILPEQLKAAIRAATITGNFFPVVCGSSFKNKGVKKMIDAVIDYLPSPVDVPPIKAFRDEEEITIEASDDQEFSALAFKIMNDPFVGSLTFFRVYSGVLKKGTYIINSTKGKKERVGRILAMHANSREEIDEVRTGDIGAFVGLKDTTTGDSLISEKAKTFVLERMNFPEPVISQSLEPFSKAEIEKLATALQKLANEDPTFKTWTDIETGQTIIAGMGELHLDIIVDRLKREFNVQARVGKPQVSYRETITKSAEVEGKYIKQSGGRGQYGHVWIKFEPNPEEGFDFIDKIVGGKIPKEYIKSIQKGLEEKMQAGILAGYPLINLRATLFDGSFHEVDSSEMAFKIAASKALSRARDAVGTVLLEPIMDVSVFAPSEYAGDVMGDLSRRRGLVREQETRSDGANVIRGHVPLAEMFGYSTQLRSMTSGRGTYQMQFNHYEIVPKNISDVIVKQRAIKEDD.

The region spanning 8–282 (KDYRNIGIMA…AVIDYLPSPV (275 aa)) is the tr-type G domain. Residues 17–24 (AHIDAGKT), 81–85 (DTPGH), and 135–138 (NKMD) each bind GTP.

Belongs to the TRAFAC class translation factor GTPase superfamily. Classic translation factor GTPase family. EF-G/EF-2 subfamily.

It localises to the cytoplasm. Functionally, catalyzes the GTP-dependent ribosomal translocation step during translation elongation. During this step, the ribosome changes from the pre-translocational (PRE) to the post-translocational (POST) state as the newly formed A-site-bound peptidyl-tRNA and P-site-bound deacylated tRNA move to the P and E sites, respectively. Catalyzes the coordinated movement of the two tRNA molecules, the mRNA and conformational changes in the ribosome. The polypeptide is Elongation factor G (Mesomycoplasma hyopneumoniae (strain J / ATCC 25934 / NCTC 10110) (Mycoplasma hyopneumoniae)).